The sequence spans 383 residues: L-lactate dehydrogenase (383 aa).

Positions 1–380 (MIISSTFDYR…THESLASTDA (380 aa)) constitute an FMN hydroxy acid dehydrogenase domain. Residue tyrosine 24 coordinates substrate. The FMN site is built by serine 106 and glutamine 127. Tyrosine 129 contributes to the substrate binding site. Residue threonine 155 coordinates FMN. Position 164 (arginine 164) interacts with substrate. Lysine 251 serves as a coordination point for FMN. Histidine 275 (proton acceptor) is an active-site residue. Arginine 278 lines the substrate pocket. Residue 306–330 (DSGVRSGLDVVRMIAQGADAVMIGR) participates in FMN binding.

This sequence belongs to the FMN-dependent alpha-hydroxy acid dehydrogenase family. It depends on FMN as a cofactor.

It localises to the cell inner membrane. It catalyses the reaction (S)-lactate + A = pyruvate + AH2. Functionally, catalyzes the conversion of L-lactate to pyruvate. Is coupled to the respiratory chain. The chain is L-lactate dehydrogenase from Bartonella quintana (strain Toulouse) (Rochalimaea quintana).